A 388-amino-acid chain; its full sequence is Succinate--CoA ligase [ADP-forming] subunit beta (388 aa).

The ATP-grasp domain occupies 9-245 (KELLAKYGLP…KSQENERELK (237 aa)). ATP is bound by residues lysine 46, 53 to 55 (GRG), glutamate 100, tyrosine 103, and glutamate 108. Mg(2+) contacts are provided by asparagine 200 and aspartate 214. Residues asparagine 265 and 322 to 324 (GIV) each bind substrate.

It belongs to the succinate/malate CoA ligase beta subunit family. As to quaternary structure, heterotetramer of two alpha and two beta subunits. The cofactor is Mg(2+).

It catalyses the reaction succinate + ATP + CoA = succinyl-CoA + ADP + phosphate. The enzyme catalyses GTP + succinate + CoA = succinyl-CoA + GDP + phosphate. It functions in the pathway carbohydrate metabolism; tricarboxylic acid cycle; succinate from succinyl-CoA (ligase route): step 1/1. Its function is as follows. Succinyl-CoA synthetase functions in the citric acid cycle (TCA), coupling the hydrolysis of succinyl-CoA to the synthesis of either ATP or GTP and thus represents the only step of substrate-level phosphorylation in the TCA. The beta subunit provides nucleotide specificity of the enzyme and binds the substrate succinate, while the binding sites for coenzyme A and phosphate are found in the alpha subunit. In Laribacter hongkongensis (strain HLHK9), this protein is Succinate--CoA ligase [ADP-forming] subunit beta.